A 41-amino-acid chain; its full sequence is Photosystem I reaction center subunit IX (41 aa).

A helical membrane pass occupies residues 7 to 27 (YLSTAPVLLTLWMTFTAGFII).

Belongs to the PsaJ family.

The protein resides in the plastid. Its subcellular location is the chloroplast thylakoid membrane. Functionally, may help in the organization of the PsaE and PsaF subunits. This chain is Photosystem I reaction center subunit IX, found in Trieres chinensis (Marine centric diatom).